Reading from the N-terminus, the 281-residue chain is MSQQRPARKLPSLLLDPTEETVRRRCRDPINVEGLLPSKIRINLEDNVQYVSMRKALKVKRPRFDVSLVYLTRKFMDLVRSAPGGILDLNKVATKLGVRKRRVYDITNVLDGIDLVEKKSKNHIRWIGSDLSNFGAVPQQKKLQEELSDLSAMEDALDELIKDCAQQLFELTDDKENERLAYVTYQDIHSIQAFHEQIVIAVKAPAETRLDVPAPREDSITVHIRSTNGPIDVYLCEVEQGQTSNKRSEGVGTSSSESTHPEGPEEEENPQQSEELLEVSN.

Lys-9 is covalently cross-linked (Glycyl lysine isopeptide (Lys-Gly) (interchain with G-Cter in SUMO2)). A DNA-binding region spans residues 50 to 129 (YVSMRKALKV…SKNHIRWIGS (80 aa)). The DEF box motif lies at 95-129 (KLGVRKRRVYDITNVLDGIDLVEKKSKNHIRWIGS). The tract at residues 130-222 (DLSNFGAVPQ…PAPREDSITV (93 aa)) is dimerization. The leucine-zipper stretch occupies residues 143-164 (LQEELSDLSAMEDALDELIKDC). The tract at residues 173 to 281 (DDKENERLAY…QSEELLEVSN (109 aa)) is transcription repression. The tract at residues 241 to 281 (GQTSNKRSEGVGTSSSESTHPEGPEEEENPQQSEELLEVSN) is disordered.

It belongs to the E2F/DP family. As to quaternary structure, forms heterodimers with DP family members TFDP1 or TFDP2. Component of the DRTF1/E2F transcription factor complex. Part of the E2F6.com-1 complex in G0 phase composed of E2F6, MGA, MAX, TFDP1, CBX3, BAT8, EUHMTASE1, RING1, RNF2, MBLR, L3MBTL2 and YAF2. Component of some MLL1/MLL complex, at least composed of the core components KMT2A/MLL1, ASH2L, HCFC1/HCF1, WDR5 and RBBP5, as well as the facultative components BACC1, CHD8, E2F6, HSP70, INO80C, KANSL1, LAS1L, MAX, MCRS1, MGA, KAT8/MOF, PELP1, PHF20, PRP31, RING2, RUVB1/TIP49A, RUVB2/TIP49B, SENP3, TAF1, TAF4, TAF6, TAF7, TAF9 and TEX10. As to expression, expressed in all tissues examined. Highest levels in placenta, skeletal muscle, heart, ovary, kidney, small intestine and spleen.

It is found in the nucleus. Functionally, inhibitor of E2F-dependent transcription. Binds DNA cooperatively with DP proteins through the E2 recognition site, 5'-TTTC[CG]CGC-3'. Has a preference for the 5'-TTTCCCGC-3' E2F recognition site. E2F6 lacks the transcriptional activation and pocket protein binding domains. Appears to regulate a subset of E2F-dependent genes whose products are required for entry into the cell cycle but not for normal cell cycle progression. Represses expression of some meiosis-specific genes, including SLC25A31/ANT4. May silence expression via the recruitment of a chromatin remodeling complex containing histone H3-K9 methyltransferase activity. Overexpression delays the exit of cells from the S-phase. This Homo sapiens (Human) protein is Transcription factor E2F6.